Here is a 497-residue protein sequence, read N- to C-terminus: 4,4'-diaponeurosporene oxygenase (497 aa).

7–19 contributes to the FAD binding site; sequence VIGGGLGGISAAI.

Belongs to the carotenoid/retinoid oxidoreductase family. CrtP subfamily. Requires FAD as cofactor.

It catalyses the reaction all-trans-4,4'-diaponeurosporene + 2 AH2 + 2 O2 = 4,4'-diaponeurosporenal + 2 A + 3 H2O. The protein operates within carotenoid biosynthesis; staphyloxanthin biosynthesis; staphyloxanthin from farnesyl diphosphate: step 3/5. Its function is as follows. Involved in the biosynthesis of the yellow-orange carotenoid staphyloxanthin, which plays a role in the virulence via its protective function against oxidative stress. Catalyzes the oxidation of the terminal methyl side group of 4,4'-diaponeurosporene to form 4,4'-diaponeurosporen-4-al. In Staphylococcus aureus (strain USA300), this protein is 4,4'-diaponeurosporene oxygenase.